A 249-amino-acid chain; its full sequence is DNA repair protein RecO (249 aa).

This sequence belongs to the RecO family.

In terms of biological role, involved in DNA repair and RecF pathway recombination. The protein is DNA repair protein RecO of Desulforudis audaxviator (strain MP104C).